A 79-amino-acid polypeptide reads, in one-letter code: Conotoxin ArMSGL-0124 (79 aa).

The first 20 residues, 1–20 (MSRLGIMVLTLLLLVYMATS), serve as a signal peptide directing secretion. Positions 21 to 44 (HQDAGEKQATQRDAINFRWKRSLT) are excised as a propeptide. 3 disulfide bridges follow: cysteine 52–cysteine 64, cysteine 56–cysteine 73, and cysteine 63–cysteine 77. Residue leucine 78 is modified to Leucine amide.

Belongs to the conotoxin O3 superfamily. In terms of tissue distribution, expressed by the venom duct.

Its subcellular location is the secreted. The chain is Conotoxin ArMSGL-0124 from Conus arenatus (Sand-dusted cone).